The primary structure comprises 688 residues: Elongation factor G 2 (688 aa).

In terms of domain architecture, tr-type G spans 7–282; sequence DSIRNIGIIS…AVAAYLPSPR (276 aa). Residues 16–23, 80–84, and 134–137 contribute to the GTP site; these read SHIDAGKT, DTPGH, and NKMD.

The protein belongs to the TRAFAC class translation factor GTPase superfamily. Classic translation factor GTPase family. EF-G/EF-2 subfamily.

The protein resides in the cytoplasm. Its function is as follows. Catalyzes the GTP-dependent ribosomal translocation step during translation elongation. During this step, the ribosome changes from the pre-translocational (PRE) to the post-translocational (POST) state as the newly formed A-site-bound peptidyl-tRNA and P-site-bound deacylated tRNA move to the P and E sites, respectively. Catalyzes the coordinated movement of the two tRNA molecules, the mRNA and conformational changes in the ribosome. The polypeptide is Elongation factor G 2 (Geobacter metallireducens (strain ATCC 53774 / DSM 7210 / GS-15)).